The following is a 280-amino-acid chain: CAG pathogenicity island protein 12 (280 aa).

Positions 1–20 (MKLRASVLIGATILCLILSA) are cleaved as a signal peptide. Cysteine 21 carries N-palmitoyl cysteine lipidation. Cysteine 21 carries S-diacylglycerol cysteine lipidation.

The protein resides in the cell membrane. This Helicobacter pylori (strain ATCC 700392 / 26695) (Campylobacter pylori) protein is CAG pathogenicity island protein 12 (cagT).